Consider the following 160-residue polypeptide: uncharacterized protein (160 aa).

The signal sequence occupies residues 1–29 (MTGKTHIMGGIASCTAAAYYYGFDPVLMA). Helical transmembrane passes span 67–87 (TFTH…TYIP) and 137–157 (QLVL…LFHG).

The protein to E.coli YdjM.

It is found in the cell membrane. This is an uncharacterized protein from Bacillus subtilis (strain 168).